The following is a 117-amino-acid chain: MSQELDYPSSLSAPTSRKAETFSYLPKMTTDQIKAQVEYIISKGWNPAIEHSEPENAFSYYWYMWKLPMFGDTDANVVLAEVDACIKANPNNHVRLIGYDNYAQSQGANMLVKRGDM.

It belongs to the RuBisCO small chain family. As to quaternary structure, heterohexadecamer of 8 large and 8 small subunits.

RuBisCO catalyzes two reactions: the carboxylation of D-ribulose 1,5-bisphosphate, the primary event in carbon dioxide fixation, as well as the oxidative fragmentation of the pentose substrate. Both reactions occur simultaneously and in competition at the same active site. Although the small subunit is not catalytic it is essential for maximal activity. This is Ribulose bisphosphate carboxylase small subunit 1 from Hydrogenovibrio marinus.